We begin with the raw amino-acid sequence, 215 residues long: Urease accessory protein UreG 2 (215 aa).

11-18 (GPVGSGKT) serves as a coordination point for GTP.

It belongs to the SIMIBI class G3E GTPase family. UreG subfamily. As to quaternary structure, homodimer. UreD, UreF and UreG form a complex that acts as a GTP-hydrolysis-dependent molecular chaperone, activating the urease apoprotein by helping to assemble the nickel containing metallocenter of UreC. The UreE protein probably delivers the nickel.

It localises to the cytoplasm. Facilitates the functional incorporation of the urease nickel metallocenter. This process requires GTP hydrolysis, probably effectuated by UreG. The chain is Urease accessory protein UreG 2 from Methylorubrum populi (strain ATCC BAA-705 / NCIMB 13946 / BJ001) (Methylobacterium populi).